Here is a 294-residue protein sequence, read N- to C-terminus: MYB-like transcription factor ODO1 (294 aa).

HTH myb-type domains follow at residues 9–61 (KLGV…TNYL) and 62–116 (RPDL…KKKL). 2 DNA-binding regions (H-T-H motif) span residues 37–61 (WRAVPKLAGLKRCGKSCRLRWTNYL) and 89–112 (WSKIAARLPGRTDNEIKNHWNTHI). Disordered regions lie at residues 128–152 (PLKKEANLSDQPTTESDQNKENGHQ) and 171–191 (TEFDNNSSFSSSASSSENSSC).

In terms of tissue distribution, restricted to the petals, with the highest expression in the limb, probably in both epidermal and mesophyll cell layers.

It localises to the nucleus. In terms of biological role, R2R3 MYB-type transcription factor controlling the production of volatile organic compounds (VOCs), including floral volatile benzenoids and phenylpropanoids (FVBP), in flowers of fragrant cultivars (e.g. cv. Mitchell and cv. V26) by regulating the shikimate pathway, via the activation of several genes (e.g. EPSPS, ADT1, PAL1, CFAT and CCoAOMT1). This scent, mostly produced in the evening and night by the petals, attracts the pollinators (e.g. the night-active hawkmoth pollinator Manduca sexta). Promotes the expression of ABCG1 in petals three hours before the onset of volatile scent emission. Anthocyanins production is not controlled by ODO1 as color and scent are produced at different stages of development. Seems to trigger a negative feed-back loop that represses the expression of EOBI. The chain is MYB-like transcription factor ODO1 from Petunia hybrida (Petunia).